The chain runs to 343 residues: F17b-G fimbrial adhesin (343 aa).

The N-terminal stretch at 1–22 (MTNFYKVFLAVFILVCCNISHA) is a signal peptide. Positions 23 to 199 (VVSFIGSTEN…LNPFTLNDTV (177 aa)) are receptor-binding lectin domain. Residues 65-66 (AN), 110-111 (DT), and 138-141 (STQG) contribute to the a carbohydrate site. A disulfide bridge connects residues cysteine 75 and cysteine 132. The interval 200 to 343 (TSCRLLTPSA…GISTFTFSYQ (144 aa)) is fimbrillin-binding domain. A disordered region spans residues 287–307 (LKFGPDSPVKGNENQWQLSTG). The segment covering 298–307 (NENQWQLSTG) has biased composition (polar residues).

This sequence belongs to the fimbrial protein family.

It localises to the fimbrium. Essential fimbrial adhesion factor that mediates binding to N-acetylglucosamine-containing receptors in the host intestinal microvilli, leading to colonization of the intestinal tissue, and diarrhea or septicemia. Also confers adhesiveness to laminin and basement membranes. This chain is F17b-G fimbrial adhesin (f17bG), found in Escherichia coli.